We begin with the raw amino-acid sequence, 344 residues long: Phosphoribosylformylglycinamidine cyclo-ligase (344 aa).

This sequence belongs to the AIR synthase family.

It is found in the cytoplasm. It catalyses the reaction 2-formamido-N(1)-(5-O-phospho-beta-D-ribosyl)acetamidine + ATP = 5-amino-1-(5-phospho-beta-D-ribosyl)imidazole + ADP + phosphate + H(+). The protein operates within purine metabolism; IMP biosynthesis via de novo pathway; 5-amino-1-(5-phospho-D-ribosyl)imidazole from N(2)-formyl-N(1)-(5-phospho-D-ribosyl)glycinamide: step 2/2. This Bifidobacterium animalis subsp. lactis (strain AD011) protein is Phosphoribosylformylglycinamidine cyclo-ligase.